The chain runs to 538 residues: Low affinity inorganic phosphate transporter 3 (538 aa).

At 1-24 (MAKDQLQVLNALDVAKTQLYHFTA) the chain is on the cytoplasmic side. The chain crosses the membrane as a helical span at residues 25–45 (IVIAGMGFFTDAYDLFCISLV). Residues 46–70 (TKLLGRIYYFHEGAPKPGILPSGIS) lie on the Extracellular side of the membrane. The chain crosses the membrane as a helical span at residues 71–91 (AAVNGVAFIGTLSGQLFFGWL). Over 92-99 (GDKLGRKK) the chain is Cytoplasmic. Residues 100-120 (VYGMTLMLMVICSIACGLSFG) traverse the membrane as a helical segment. At 121–122 (KT) the chain is on the extracellular side. Residues 123–143 (ANGVIATLCFFRFWLGFGIGG) form a helical membrane-spanning segment. Residues 144–164 (DYPLSATIMSEYANKKTRGAF) are Cytoplasmic-facing. Residues 165 to 185 (IAAVFAMQGFGILAGGIVALI) traverse the membrane as a helical segment. Topologically, residues 186-211 (VSAGFKNAYPAPTYSAHGKDSTPPEA) are extracellular. A helical membrane pass occupies residues 212 to 232 (DYVWRIIVMIGALPALLTYYW). Over 233-292 (RMKMPETARYTALVAKNTVKAAADMSKVLNVEIEEDKATVEKIEENGNSFGLFSKEFLRR) the chain is Cytoplasmic. A helical membrane pass occupies residues 293–313 (HGLHLLGTTSTWFLLDIAFYS). Topologically, residues 314–345 (QNLFQKDIFSKIGWIPPPETMNALDEVFRIAR) are extracellular. Residues 346-366 (AQTLIALCSTVPGYWFTVAFI) form a helical membrane-spanning segment. The Cytoplasmic segment spans residues 367-371 (DKMGR). Residues 372–392 (FAIQLMGSFFMTVFMFALAIP) form a helical membrane-spanning segment. Residues 393-402 (YDHWTKKENR) are Extracellular-facing. A helical membrane pass occupies residues 403-423 (IGFVIMYSLTFFFANFGPNAT). Residues 424-442 (TFVVPAEIFPARLRSTCHG) lie on the Cytoplasmic side of the membrane. The helical transmembrane segment at 443–463 (ISAAAGKAGAIVGAFGFLYAA) threads the bilayer. The Extracellular segment spans residues 464 to 483 (QSTDPKKVDAGYPTGIGVKN). The chain crosses the membrane as a helical span at residues 484 to 504 (ALIVLGCVNFLGMLSTLLVPE). At 505–538 (SKGKSLEEMSKENEGEEENYGTETKGENAQTVPV) the chain is on the cytoplasmic side. Positions 506–517 (KGKSLEEMSKEN) are enriched in basic and acidic residues. The tract at residues 506–538 (KGKSLEEMSKENEGEEENYGTETKGENAQTVPV) is disordered.

This sequence belongs to the major facilitator superfamily. Phosphate:H(+) symporter (TC 2.A.1.9) family. As to expression, expressed at low levels in non-mycorrhized roots.

Its subcellular location is the cell membrane. The enzyme catalyses phosphate(in) + H(+)(in) = phosphate(out) + H(+)(out). Functionally, low-affinity transporter for external inorganic phosphate (Pi) probably involved in the acquisition of phosphate released by arbuscular mycorrhizal (AM) fungi during AM symbiosis. The polypeptide is Low affinity inorganic phosphate transporter 3 (Petunia hybrida (Petunia)).